Consider the following 422-residue polypeptide: Glucosylglycerol-phosphate phosphatase (422 aa).

Residue Asp-403 is the Proton donor of the active site.

It belongs to the histidine acid phosphatase family. Monomer. Interacts with GGPS.

The catalysed reaction is 2-O-(alpha-D-glucopyranosyl)-sn-glycerol 3-phosphate + H2O = 2-O-(alpha-D-glucopyranosyl)glycerol + phosphate. Its function is as follows. Phosphorylates glucosylglycerol-phosphate the precursor of the osmoprotectant glucosylglycerol necessary for salt adaptation of Synechocystis. In Synechocystis sp. (strain ATCC 27184 / PCC 6803 / Kazusa), this protein is Glucosylglycerol-phosphate phosphatase (stpA).